Here is a 272-residue protein sequence, read N- to C-terminus: 3-methyl-2-oxobutanoate hydroxymethyltransferase (272 aa).

2 residues coordinate Mg(2+): D43 and D82. 3-methyl-2-oxobutanoate is bound by residues 43-44 (DS), D82, and K112. E114 contributes to the Mg(2+) binding site. E179 acts as the Proton acceptor in catalysis.

This sequence belongs to the PanB family. As to quaternary structure, homodecamer; pentamer of dimers. It depends on Mg(2+) as a cofactor.

It localises to the cytoplasm. The enzyme catalyses 3-methyl-2-oxobutanoate + (6R)-5,10-methylene-5,6,7,8-tetrahydrofolate + H2O = 2-dehydropantoate + (6S)-5,6,7,8-tetrahydrofolate. It participates in cofactor biosynthesis; (R)-pantothenate biosynthesis; (R)-pantoate from 3-methyl-2-oxobutanoate: step 1/2. Catalyzes the reversible reaction in which hydroxymethyl group from 5,10-methylenetetrahydrofolate is transferred onto alpha-ketoisovalerate to form ketopantoate. The sequence is that of 3-methyl-2-oxobutanoate hydroxymethyltransferase from Staphylococcus aureus (strain Mu3 / ATCC 700698).